Consider the following 357-residue polypeptide: Putative diaminopimelate epimerase, chloroplastic (357 aa).

Residues 1–47 (MSSATAAATATIAAAAAAAAKLAATPAPAPSRRRLTLRGNPTARRCV) constitute a chloroplast transit peptide. Catalysis depends on residues Cys-145 and Cys-300.

Belongs to the diaminopimelate epimerase family.

The protein localises to the plastid. It localises to the chloroplast. It catalyses the reaction (2S,6S)-2,6-diaminopimelate = meso-2,6-diaminopimelate. The protein operates within amino-acid biosynthesis; L-lysine biosynthesis via DAP pathway; DL-2,6-diaminopimelate from LL-2,6-diaminopimelate: step 1/1. The sequence is that of Putative diaminopimelate epimerase, chloroplastic (DAPF) from Oryza sativa subsp. indica (Rice).